The chain runs to 830 residues: Periplasmic nitrate reductase 2 (830 aa).

The tat-type signal signal peptide spans 1–31; the sequence is MKVSRRKFIKAQAVASAAAAAGISIPISASN. The 57-residue stretch at 41–97 folds into the 4Fe-4S Mo/W bis-MGD-type domain; it reads ITWEKAPCRFCGTGCSVNVGTKEGKVVATHGDIKSPVNRGLNCVKGYFLSKIMYGKD. [4Fe-4S] cluster-binding residues include Cys48, Cys51, Cys55, and Cys83. Residues Lys85, Gln152, Asn177, Cys181, 245 to 249, 264 to 266, Met374, Gln378, Asn484, 510 to 511, Lys533, Asp560, and 720 to 729 each bind Mo-bis(molybdopterin guanine dinucleotide); these read STFEH, QSD, SE, and TGRVIEHWHS. Position 796 (Trp796) interacts with substrate. The Mo-bis(molybdopterin guanine dinucleotide) site is built by Asn804 and Lys821.

This sequence belongs to the prokaryotic molybdopterin-containing oxidoreductase family. NasA/NapA/NarB subfamily. As to quaternary structure, component of the periplasmic nitrate reductase NapAB complex composed of NapA and NapB. [4Fe-4S] cluster is required as a cofactor. It depends on Mo-bis(molybdopterin guanine dinucleotide) as a cofactor. Predicted to be exported by the Tat system. The position of the signal peptide cleavage has not been experimentally proven.

Its subcellular location is the periplasm. The enzyme catalyses 2 Fe(II)-[cytochrome] + nitrate + 2 H(+) = 2 Fe(III)-[cytochrome] + nitrite + H2O. Catalytic subunit of the periplasmic nitrate reductase complex NapAB. Receives electrons from NapB and catalyzes the reduction of nitrate to nitrite. This Photobacterium profundum (strain SS9) protein is Periplasmic nitrate reductase 2.